We begin with the raw amino-acid sequence, 253 residues long: Large ribosomal subunit protein uL4 (253 aa).

The interval 61–107 is disordered; the sequence is GWGSGRGTSHVPRLVNSSRAARVPHARGGRRAHPPKPEADRSEKVNT. Positions 82-94 are enriched in basic residues; the sequence is RVPHARGGRRAHP. The segment covering 95 to 107 has biased composition (basic and acidic residues); that stretch reads PKPEADRSEKVNT.

The protein belongs to the universal ribosomal protein uL4 family. Part of the 50S ribosomal subunit.

In terms of biological role, one of the primary rRNA binding proteins, this protein initially binds near the 5'-end of the 23S rRNA. It is important during the early stages of 50S assembly. It makes multiple contacts with different domains of the 23S rRNA in the assembled 50S subunit and ribosome. Its function is as follows. Forms part of the polypeptide exit tunnel. The protein is Large ribosomal subunit protein uL4 of Methanosarcina barkeri (strain Fusaro / DSM 804).